Consider the following 588-residue polypeptide: ustiloxin B cluster transcription factor ustR (588 aa).

A DNA-binding region (zn(2)-C6 fungal-type) is located at residues 11–38 (CWTCRLRRKKCNEDGQPCSNCEARGVFC). Residues 68–92 (RTRRARATPTNSINGEPRRPSIDMN) form a disordered region.

It is found in the nucleus. Functionally, transcription factor that regulates the expression of the gene cluster that mediates the biosynthesis of ustiloxin B, an antimitotic tetrapeptide. The protein is ustiloxin B cluster transcription factor ustR of Aspergillus flavus (strain ATCC 200026 / FGSC A1120 / IAM 13836 / NRRL 3357 / JCM 12722 / SRRC 167).